A 243-amino-acid chain; its full sequence is Ubiquinone/menaquinone biosynthesis C-methyltransferase UbiE (243 aa).

S-adenosyl-L-methionine-binding positions include Thr69, Asp90, and Asp116 to Ala117.

It belongs to the class I-like SAM-binding methyltransferase superfamily. MenG/UbiE family.

The catalysed reaction is a 2-demethylmenaquinol + S-adenosyl-L-methionine = a menaquinol + S-adenosyl-L-homocysteine + H(+). It catalyses the reaction a 2-methoxy-6-(all-trans-polyprenyl)benzene-1,4-diol + S-adenosyl-L-methionine = a 5-methoxy-2-methyl-3-(all-trans-polyprenyl)benzene-1,4-diol + S-adenosyl-L-homocysteine + H(+). Its pathway is quinol/quinone metabolism; menaquinone biosynthesis; menaquinol from 1,4-dihydroxy-2-naphthoate: step 2/2. The protein operates within cofactor biosynthesis; ubiquinone biosynthesis. In terms of biological role, methyltransferase required for the conversion of demethylmenaquinol (DMKH2) to menaquinol (MKH2) and the conversion of 2-polyprenyl-6-methoxy-1,4-benzoquinol (DDMQH2) to 2-polyprenyl-3-methyl-6-methoxy-1,4-benzoquinol (DMQH2). In Paraburkholderia phytofirmans (strain DSM 17436 / LMG 22146 / PsJN) (Burkholderia phytofirmans), this protein is Ubiquinone/menaquinone biosynthesis C-methyltransferase UbiE.